The following is a 72-amino-acid chain: Disintegrin basilicin (72 aa).

Residues 1–72 form the Disintegrin domain; the sequence is AGEECDCGSP…ADCPRNHFHA (72 aa). 6 cysteine pairs are disulfide-bonded: C5/C20, C7/C15, C14/C37, C28/C34, C33/C58, and C46/C65. The short motif at 50 to 52 is the Cell attachment site element; sequence RGD.

The protein belongs to the venom metalloproteinase (M12B) family. P-II subfamily. P-IIa sub-subfamily. In terms of assembly, monomer (disintegrin). Expressed by the venom gland.

It localises to the secreted. Inhibits fibrinogen interaction with platelets. Acts by binding to alpha-IIb/beta-3 (ITGA2B/ITGB3) on the platelet surface and inhibits aggregation induced by ADP, thrombin, platelet-activating factor and collagen. The sequence is that of Disintegrin basilicin from Crotalus basiliscus (Mexican west-coast rattlesnake).